A 471-amino-acid chain; its full sequence is ATP synthase subunit beta (471 aa).

154 to 161 (GGAGVGKT) contacts ATP.

Belongs to the ATPase alpha/beta chains family. In terms of assembly, F-type ATPases have 2 components, CF(1) - the catalytic core - and CF(0) - the membrane proton channel. CF(1) has five subunits: alpha(3), beta(3), gamma(1), delta(1), epsilon(1). CF(0) has three main subunits: a(1), b(2) and c(9-12). The alpha and beta chains form an alternating ring which encloses part of the gamma chain. CF(1) is attached to CF(0) by a central stalk formed by the gamma and epsilon chains, while a peripheral stalk is formed by the delta and b chains.

It localises to the cell membrane. It catalyses the reaction ATP + H2O + 4 H(+)(in) = ADP + phosphate + 5 H(+)(out). Produces ATP from ADP in the presence of a proton gradient across the membrane. The catalytic sites are hosted primarily by the beta subunits. The chain is ATP synthase subunit beta from Mesomycoplasma hyopneumoniae (strain 7448) (Mycoplasma hyopneumoniae).